The sequence spans 357 residues: Phosphoribosylformylglycinamidine cyclo-ligase (357 aa).

This sequence belongs to the AIR synthase family.

The protein localises to the cytoplasm. It catalyses the reaction 2-formamido-N(1)-(5-O-phospho-beta-D-ribosyl)acetamidine + ATP = 5-amino-1-(5-phospho-beta-D-ribosyl)imidazole + ADP + phosphate + H(+). It functions in the pathway purine metabolism; IMP biosynthesis via de novo pathway; 5-amino-1-(5-phospho-D-ribosyl)imidazole from N(2)-formyl-N(1)-(5-phospho-D-ribosyl)glycinamide: step 2/2. In Allorhizobium ampelinum (strain ATCC BAA-846 / DSM 112012 / S4) (Agrobacterium vitis (strain S4)), this protein is Phosphoribosylformylglycinamidine cyclo-ligase.